The sequence spans 244 residues: Sperm-egg fusion protein Juno (244 aa).

The N-terminal stretch at 1-19 is a signal peptide; sequence MAQWWQILLGLWAVLPTLA. 8 cysteine pairs are disulfide-bonded: C27/C55, C47/C95, C56/C99, C79/C166, C86/C137, C126/C200, C130/C180, and C143/C160. The important for interaction with IZUMO1 stretch occupies residues 62-81; the sequence is WEAHLEEPLLFNFSMMHCGL. N-linked (GlcNAc...) asparagine glycosylation occurs at N73. N185 carries N-linked (GlcNAc...) asparagine glycosylation. G222 is lipidated: GPI-anchor amidated glycine. The propeptide occupies 223 to 244; sequence SALAPQLSYTLPAFSLCLLFHP.

The protein belongs to the folate receptor family. In terms of assembly, monomer. Interacts with IZUMO1; the interaction is direct. IZUMO1 and IZUMO1R/JUNO form a complex with 1:1 stoichiometry. Interacts with WDR54. In terms of processing, the protein is rapidly cleaved following fertilization, being only weakly detectable in zona-intact fertilized eggs at telophase II and undetectable at the pronuclear stage. Sheding is probably required to block to polyspermy and ensuring egg fusion with a single sperm. In terms of tissue distribution, widely expressed with higher expression in thymus, spleen and lung. Present at the cell surface of unfertilized oocytes, while it is barely detectable 30 to 40 minutes after fertilization (at protein level).

It localises to the cell membrane. In terms of biological role, receptor for IZUMO1 present at the cell surface of oocytes (oolemma), which is essential for species-specific gamete recognition and fertilization. The IZUMO1:IZUMO1R/JUNO interaction is a necessary adhesion event between sperm and egg that is required for fertilization but is not sufficient for cell fusion. The ligand-receptor interaction probably does not act as a membrane 'fusogen'. Does not bind folate. This is Sperm-egg fusion protein Juno from Mus musculus (Mouse).